The following is a 571-amino-acid chain: MSNKKTFKKYSRVAGLLTVALIIGNLVTANAESNKQNTASTETTTTNEQPKPESSELTIEKAGQKMDDMLNSNDMIKLAPKEMPLESAEKEEKKSEDKKKSEEDHTEEINDKIYSLNYNELEVLAKNGETIENFVPKEGVKKADKFIVIERKKKNINTTPVDISIIDSVTDRTYPAALQLANKGFTENKPDAVVTKRNPQKIHIDLPGMGDKATVEVNDPTYANVSTAIDNLVNQWHDNYSGGNTLPARTQYTESMVYSKSQIEAALNVNSKILDGTLGIDFKSISKGEKKVMIAAYKQIFYTVSANLPNNPADVFDKSVTFKDLQRKGVSNEAPPLFVSNVAYGRTVFVKLETSSKSNDVEAAFSAALKGTDVKTNGKYSDILENSSFTAVVLGGDAAEHNKVVTKDFDVIRNVIKDNATFSRKNPAYPISYTSVFLKNNKIAGVNNRTEYVETTSTEYTSGKINLSHQGAYVAQYEILWDEINYDDKGKEVITKRRWDNNWYSKTSPFSTVIPLGANSRNIRIMARECTGLAWEWWRKVIDERDVKLSKEINVNISGSTLSPYGSITYK.

The first 33 residues, 1 to 33, serve as a signal peptide directing secretion; sequence MSNKKTFKKYSRVAGLLTVALIIGNLVTANAES. Disordered regions lie at residues 32–56 and 81–108; these read ESNK…ESSE and KEMP…HTEE. Positions 37-48 are enriched in low complexity; that stretch reads NTASTETTTTNE. A run of 4 beta stranded transmembrane segments spans residues 260-273, 280-289, 358-367, and 375-387; these read KSQI…NSKI, IDFKSISKGE, SNDVEAAFSA, and KTNG…LENS. The Conserved undecapeptide motif lies at 529-539; sequence ECTGLAWEWWR. A short sequence motif (cholesterol binding) is located at residue Thr561.

This sequence belongs to the cholesterol-dependent cytolysin family. As to quaternary structure, homooligomeric pore complex of 35 to 50 subunits; when inserted in the host membrane.

It localises to the secreted. Its subcellular location is the host cell membrane. A cholesterol-dependent toxin that causes cytolysis by forming pores in cholesterol containing host membranes. After binding to target membranes, the protein undergoes a major conformation change, leading to its insertion in the host membrane and formation of an oligomeric pore complex. Cholesterol is required for binding to host membranes, membrane insertion and pore formation; cholesterol binding is mediated by a Thr-Leu pair in the C-terminus. Can be reversibly inactivated by oxidation. The protein is Streptolysin O (slo) of Streptococcus pyogenes serotype M6 (strain ATCC BAA-946 / MGAS10394).